Reading from the N-terminus, the 308-residue chain is 1D-myo-inositol 2-acetamido-2-deoxy-alpha-D-glucopyranoside deacetylase (308 aa).

Residues H18, D21, and H153 each contribute to the Zn(2+) site.

Belongs to the MshB deacetylase family. It depends on Zn(2+) as a cofactor.

It carries out the reaction 1D-myo-inositol 2-acetamido-2-deoxy-alpha-D-glucopyranoside + H2O = 1D-myo-inositol 2-amino-2-deoxy-alpha-D-glucopyranoside + acetate. In terms of biological role, catalyzes the deacetylation of 1D-myo-inositol 2-acetamido-2-deoxy-alpha-D-glucopyranoside (GlcNAc-Ins) in the mycothiol biosynthesis pathway. This chain is 1D-myo-inositol 2-acetamido-2-deoxy-alpha-D-glucopyranoside deacetylase, found in Salinispora arenicola (strain CNS-205).